The sequence spans 518 residues: Glutamate--cysteine ligase (518 aa).

The protein belongs to the glutamate--cysteine ligase type 1 family. Type 1 subfamily.

The enzyme catalyses L-cysteine + L-glutamate + ATP = gamma-L-glutamyl-L-cysteine + ADP + phosphate + H(+). It functions in the pathway sulfur metabolism; glutathione biosynthesis; glutathione from L-cysteine and L-glutamate: step 1/2. In Escherichia fergusonii (strain ATCC 35469 / DSM 13698 / CCUG 18766 / IAM 14443 / JCM 21226 / LMG 7866 / NBRC 102419 / NCTC 12128 / CDC 0568-73), this protein is Glutamate--cysteine ligase.